Reading from the N-terminus, the 380-residue chain is Chaperone protein DnaJ (380 aa).

In terms of domain architecture, J spans 5 to 70; the sequence is DYYEVLGVSK…QKRQTYDQYG (66 aa). The CR-type zinc finger occupies 136-214; that stretch reads GKEVEIKIPT…CHGQGRVEKT (79 aa). Cysteine 149, cysteine 152, cysteine 166, cysteine 169, cysteine 188, cysteine 191, cysteine 202, and cysteine 205 together coordinate Zn(2+). 4 CXXCXGXG motif repeats span residues 149–156, 166–173, 188–195, and 202–209; these read CDPCDGSG, CTTCHGAG, CPTCQGQG, and CDSCHGQG.

It belongs to the DnaJ family. In terms of assembly, homodimer. Zn(2+) serves as cofactor.

The protein localises to the cytoplasm. Functionally, participates actively in the response to hyperosmotic and heat shock by preventing the aggregation of stress-denatured proteins and by disaggregating proteins, also in an autonomous, DnaK-independent fashion. Unfolded proteins bind initially to DnaJ; upon interaction with the DnaJ-bound protein, DnaK hydrolyzes its bound ATP, resulting in the formation of a stable complex. GrpE releases ADP from DnaK; ATP binding to DnaK triggers the release of the substrate protein, thus completing the reaction cycle. Several rounds of ATP-dependent interactions between DnaJ, DnaK and GrpE are required for fully efficient folding. Also involved, together with DnaK and GrpE, in the DNA replication of plasmids through activation of initiation proteins. This Pseudoalteromonas translucida (strain TAC 125) protein is Chaperone protein DnaJ.